The following is a 440-amino-acid chain: Streptokinase (440 aa).

The signal sequence occupies residues 1–26; the sequence is MKNYLSFGMFALLFALTFGTVKPVQA. The tract at residues 72-94 is disordered; it reads PAQGGKTEQGLRPKSKPLATDKG.

Functionally, this protein is not a protease, but it activates plasminogen by complexing with it. As a potential virulence factor, it is thought to prevent the formation of effective fibrin barriers around the site of infection, thereby contributing to the invasiveness of the cells. The sequence is that of Streptokinase (ska) from Streptococcus pyogenes.